A 77-amino-acid chain; its full sequence is U11-lycotoxin-Ls1a (77 aa).

A signal peptide spans 1–20 (MKLIILTGLVLFAIVSLIEA). Residues 21–26 (EEESGR) constitute a propeptide that is removed on maturation.

It belongs to the neurotoxin 19 (CSTX) family. 10 (U11-Lctx) subfamily. In terms of processing, contains 4 disulfide bonds. As to expression, expressed by the venom gland.

It localises to the secreted. In Lycosa singoriensis (Wolf spider), this protein is U11-lycotoxin-Ls1a.